Consider the following 371-residue polypeptide: Barbiturase 2 (371 aa).

The RU A stretch occupies residues 1–104; it reads MTRPIEVRKV…TIFAYAPEGR (104 aa). Substrate contacts are provided by residues R53 and 83-84; that span reads SG. The tract at residues 112–247 is RU B; it reads RVTVGYAMSE…AQIVVVGNAR (136 aa). Residue K162 is part of the active site. Substrate is bound by residues N194 and 230–231; that span reads SS. The active-site Nucleophile is S230. Positions 253 to 371 are RU C; that stretch reads FRVGHSIMKD…PVIAIVDLEA (119 aa). E303 is a Mg(2+) binding site. Residues K330 and 349 to 350 contribute to the substrate site; that span reads SV. Mg(2+) is bound by residues A352, Q355, G356, P357, and G360.

The protein belongs to the cyclic amide hydrolase (CyAH) family. As to quaternary structure, homotetramer.

It carries out the reaction barbiturate + H2O = 3-oxo-3-ureidopropanoate. It functions in the pathway pyrimidine metabolism; uracil degradation via oxidative pathway; malonate and urea from uracil: step 2/3. In terms of biological role, responsible for the hydrolysis of barbituric acid (2,4,6-trihydroxy-1,3-pyrimidine), an intermediate in the oxidative catabolism of pyrimidines. Catalyzes the hydrolytic opening of the pyrimidine ring of barbituric acid to yield ureidomalonic acid. Can also use cyanuric acid as a substrate, albeit with lower efficiency. The sequence is that of Barbiturase 2 from Nocardioides sp. (strain ATCC BAA-499 / JS614).